The following is a 458-amino-acid chain: Phosphoglucosamine mutase (458 aa).

Ser108 (phosphoserine intermediate) is an active-site residue. Residues Ser108, Asp247, Asp249, and Asp251 each coordinate Mg(2+). Ser108 carries the post-translational modification Phosphoserine.

It belongs to the phosphohexose mutase family. Requires Mg(2+) as cofactor. Post-translationally, activated by phosphorylation.

The catalysed reaction is alpha-D-glucosamine 1-phosphate = D-glucosamine 6-phosphate. Functionally, catalyzes the conversion of glucosamine-6-phosphate to glucosamine-1-phosphate. The polypeptide is Phosphoglucosamine mutase (Nitrosomonas europaea (strain ATCC 19718 / CIP 103999 / KCTC 2705 / NBRC 14298)).